A 66-amino-acid polypeptide reads, in one-letter code: Large ribosomal subunit protein bL33c (66 aa).

It belongs to the bacterial ribosomal protein bL33 family.

The protein resides in the plastid. In Cuscuta gronovii (Common dodder), this protein is Large ribosomal subunit protein bL33c.